The chain runs to 286 residues: DegV domain-containing protein M6_Spy1658 (286 aa).

The 280-residue stretch at 3-282 (FTIMTDSTAD…PNTLAVFVIG (280 aa)) folds into the DegV domain. Hexadecanoate is bound by residues threonine 62 and serine 94.

In terms of biological role, may bind long-chain fatty acids, such as palmitate, and may play a role in lipid transport or fatty acid metabolism. The protein is DegV domain-containing protein M6_Spy1658 of Streptococcus pyogenes serotype M6 (strain ATCC BAA-946 / MGAS10394).